A 459-amino-acid polypeptide reads, in one-letter code: Cobyrinate a,c-diamide synthase (459 aa).

A GATase cobBQ-type domain is found at 249-446 (RIGMAFDEAF…VHTHFASRPG (198 aa)). Cys332 acts as the Nucleophile in catalysis.

The protein belongs to the CobB/CbiA family. It depends on Mg(2+) as a cofactor.

It carries out the reaction cob(II)yrinate + 2 L-glutamine + 2 ATP + 2 H2O = cob(II)yrinate a,c diamide + 2 L-glutamate + 2 ADP + 2 phosphate + 2 H(+). Its pathway is cofactor biosynthesis; adenosylcobalamin biosynthesis; cob(II)yrinate a,c-diamide from sirohydrochlorin (anaerobic route): step 10/10. In terms of biological role, catalyzes the ATP-dependent amidation of the two carboxylate groups at positions a and c of cobyrinate, using either L-glutamine or ammonia as the nitrogen source. This Syntrophotalea carbinolica (strain DSM 2380 / NBRC 103641 / GraBd1) (Pelobacter carbinolicus) protein is Cobyrinate a,c-diamide synthase.